We begin with the raw amino-acid sequence, 255 residues long: tRNA (guanine-N(1)-)-methyltransferase (255 aa).

S-adenosyl-L-methionine contacts are provided by residues Gly117 and 137–142; that span reads IGDYVL.

This sequence belongs to the RNA methyltransferase TrmD family. As to quaternary structure, homodimer.

The protein resides in the cytoplasm. The catalysed reaction is guanosine(37) in tRNA + S-adenosyl-L-methionine = N(1)-methylguanosine(37) in tRNA + S-adenosyl-L-homocysteine + H(+). In terms of biological role, specifically methylates guanosine-37 in various tRNAs. The chain is tRNA (guanine-N(1)-)-methyltransferase from Glaesserella parasuis serovar 5 (strain SH0165) (Haemophilus parasuis).